Here is a 128-residue protein sequence, read N- to C-terminus: Protein Wnt-10 (128 aa).

Intrachain disulfides connect Cys-3-Cys-17, Cys-5-Cys-12, Cys-74-Cys-105, Cys-90-Cys-100, and Cys-127-Cys-128. Residue Ser-9 is the site of O-palmitoleoyl serine; by PORCN attachment. A glycan (N-linked (GlcNAc...) asparagine) is linked at Asn-91.

This sequence belongs to the Wnt family. Post-translationally, palmitoleoylation is required for efficient binding to frizzled receptors. Depalmitoleoylation leads to Wnt signaling pathway inhibition. In embryo, in dorsal hindbrain; in adults, in brain.

The protein localises to the secreted. It localises to the extracellular space. The protein resides in the extracellular matrix. Functionally, ligand for members of the frizzled family of seven transmembrane receptors. Probable developmental protein. May be a signaling molecule which affects the development of discrete regions of tissues. Is likely to signal over only few cell diameters. The polypeptide is Protein Wnt-10 (wnt10) (Xenopus laevis (African clawed frog)).